The chain runs to 93 residues: UPF0147 protein PF0239 (93 aa).

This sequence belongs to the UPF0147 family.

This is UPF0147 protein PF0239 from Pyrococcus furiosus (strain ATCC 43587 / DSM 3638 / JCM 8422 / Vc1).